A 159-amino-acid polypeptide reads, in one-letter code: 3-dehydroquinate dehydratase (159 aa).

Y31 serves as the catalytic Proton acceptor. N82, H88, and D95 together coordinate substrate. Catalysis depends on H109, which acts as the Proton donor. Residues 110-111 (IS) and R120 contribute to the substrate site.

The protein belongs to the type-II 3-dehydroquinase family. As to quaternary structure, homododecamer.

It catalyses the reaction 3-dehydroquinate = 3-dehydroshikimate + H2O. It functions in the pathway metabolic intermediate biosynthesis; chorismate biosynthesis; chorismate from D-erythrose 4-phosphate and phosphoenolpyruvate: step 3/7. Functionally, catalyzes a trans-dehydration via an enolate intermediate. This Streptomyces avermitilis (strain ATCC 31267 / DSM 46492 / JCM 5070 / NBRC 14893 / NCIMB 12804 / NRRL 8165 / MA-4680) protein is 3-dehydroquinate dehydratase.